Reading from the N-terminus, the 1099-residue chain is Transmembrane protein 132D (1099 aa).

The N-terminal stretch at 1 to 30 is a signal peptide; the sequence is MCPSEMGTLWHHWSPVLISLAALFSKVTEG. Over 31–915 the chain is Extracellular; that stretch reads RGILESIQRF…LMQASKGLSD (885 aa). N-linked (GlcNAc...) asparagine glycosylation occurs at asparagine 505. The disordered stretch occupies residues 797–858; the sequence is FGQNDANPNT…LMEGRGTTTD (62 aa). Over residues 835-848 the composition is skewed to low complexity; the sequence is GSQEGQYYGSSSMG. The chain crosses the membrane as a helical span at residues 916–936; sequence LEIGMYALLGVFCLAILVFLI. Residues 937–1099 are Cytoplasmic-facing; that stretch reads NCVTFALKYR…NYMERLHENV (163 aa).

It belongs to the TMEM132 family. Interacts (via C-terminus) with NCKAP. Expressed in mature oligodendrocytes. Detected in the brain, lung, pancreas and testis. Highly expressed in mature neurons of the adult nervous system.

It is found in the membrane. Functionally, regulate neuronals morphology via inhibition of the WAVE regulatory complex (WCR), a complex that controls F-actin cytoskeletal dynamics. This chain is Transmembrane protein 132D, found in Homo sapiens (Human).